We begin with the raw amino-acid sequence, 382 residues long: Flap endonuclease 1 (382 aa).

An N-domain region spans residues 1 to 105 (MGIKGLTKLL…QELAKRYSKR (105 aa)). Residue Asp-34 coordinates Mg(2+). Residue Arg-71 participates in DNA binding. Mg(2+)-binding residues include Asp-87, Glu-159, Glu-161, Asp-180, and Asp-182. An I-domain region spans residues 123 to 254 (DIEKFSKRTV…LTALKLIRQH (132 aa)). DNA is bound at residue Glu-159. Positions 232 and 234 each coordinate DNA. Asp-234 provides a ligand contact to Mg(2+). The interaction with PCNA stretch occupies residues 338–346 (SQGRLESFF). The segment at 339 to 382 (QGRLESFFKPTANPSVPIKRKETPVNNAKETNKKTKAGGGKKKK) is disordered. Residues 372–382 (KTKAGGGKKKK) are compositionally biased toward basic residues.

It belongs to the XPG/RAD2 endonuclease family. FEN1 subfamily. In terms of assembly, interacts with PCNA. Three molecules of FEN1 bind to one PCNA trimer with each molecule binding to one PCNA monomer. PCNA stimulates the nuclease activity without altering cleavage specificity. The cofactor is Mg(2+). In terms of processing, phosphorylated. Phosphorylation upon DNA damage induces relocalization to the nuclear plasma.

It is found in the nucleus. The protein localises to the nucleolus. It localises to the nucleoplasm. Its subcellular location is the mitochondrion. In terms of biological role, structure-specific nuclease with 5'-flap endonuclease and 5'-3' exonuclease activities involved in DNA replication and repair. During DNA replication, cleaves the 5'-overhanging flap structure that is generated by displacement synthesis when DNA polymerase encounters the 5'-end of a downstream Okazaki fragment. It enters the flap from the 5'-end and then tracks to cleave the flap base, leaving a nick for ligation. Also involved in the long patch base excision repair (LP-BER) pathway, by cleaving within the apurinic/apyrimidinic (AP) site-terminated flap. Acts as a genome stabilization factor that prevents flaps from equilibrating into structures that lead to duplications and deletions. Also possesses 5'-3' exonuclease activity on nicked or gapped double-stranded DNA, and exhibits RNase H activity. Also involved in replication and repair of rDNA and in repairing mitochondrial DNA. The polypeptide is Flap endonuclease 1 (Glycine max (Soybean)).